Consider the following 441-residue polypeptide: Glutamyl-tRNA reductase (441 aa).

Substrate contacts are provided by residues T47–R50, S110, E115–E117, and Q121. C48 (nucleophile) is an active-site residue. G192–A197 lines the NADP(+) pocket.

Belongs to the glutamyl-tRNA reductase family. In terms of assembly, homodimer.

The catalysed reaction is (S)-4-amino-5-oxopentanoate + tRNA(Glu) + NADP(+) = L-glutamyl-tRNA(Glu) + NADPH + H(+). It functions in the pathway porphyrin-containing compound metabolism; protoporphyrin-IX biosynthesis; 5-aminolevulinate from L-glutamyl-tRNA(Glu): step 1/2. Catalyzes the NADPH-dependent reduction of glutamyl-tRNA(Glu) to glutamate 1-semialdehyde (GSA). This chain is Glutamyl-tRNA reductase, found in Pseudarthrobacter chlorophenolicus (strain ATCC 700700 / DSM 12829 / CIP 107037 / JCM 12360 / KCTC 9906 / NCIMB 13794 / A6) (Arthrobacter chlorophenolicus).